The primary structure comprises 167 residues: Protein-export protein SecB (167 aa).

The protein belongs to the SecB family. As to quaternary structure, homotetramer, a dimer of dimers. One homotetramer interacts with 1 SecA dimer.

It localises to the cytoplasm. Its function is as follows. One of the proteins required for the normal export of preproteins out of the cell cytoplasm. It is a molecular chaperone that binds to a subset of precursor proteins, maintaining them in a translocation-competent state. It also specifically binds to its receptor SecA. The polypeptide is Protein-export protein SecB (Wolbachia sp. subsp. Brugia malayi (strain TRS)).